The sequence spans 1789 residues: Genome polyprotein (1789 aa).

The segment at 1–25 (MMMASKDVVPTAASSENANNNSSIK) is disordered. The segment at 1–183 (MMMASKDVVP…MCPLPPVDQR (183 aa)) is interaction with host MAP1LC3A/LC3. Residues 12–23 (AASSENANNNSS) are compositionally biased toward low complexity. The segment at 184 to 398 (STTPATEPTI…ASLLPDFHLQ (215 aa)) is interaction with NTPase. The interval 301 to 398 (HPTQDWSRDT…ASLLPDFHLQ (98 aa)) is interaction with NS4. Host ER membrane association stretches follow at residues 318–349 (KLEM…KPLN) and 360–398 (TFMG…FHLQ). An interaction with NS1-2 and NS4 and homooligomerization region spans residues 399–574 (GPEDLARDLV…GKTKAAEHLA (176 aa)). The SF3 helicase domain maps to 532–697 (RISMARAALA…EHTRKVSPGD (166 aa)). Residue 560–567 (GPPGIGKT) coordinates ATP. The interval 651-756 (AIVITTNAPG…AVALTMERQD (106 aa)) is important for mitochondrion targeting. A functions as endoplasmic reticulum export signal region spans residues 826 to 832 (YIIESDG). The interval 865-910 (RAVAYASCFQSAITTILQMAGSALVINRAVKRMFGTRTAAMALEGP) is host membrane association. The interval 958-981 (DAVPEGKNKGKTKKGRGRKNNYNA) is disordered. Residues 966–976 (KGKTKKGRGRK) are compositionally biased toward basic residues. The tract at residues 989–994 (DEEYEE) is acidic. Tyr-992 carries the post-translational modification O-(5'-phospho-RNA)-tyrosine. The interval 1084 to 1100 (WADDDREVDYNEKINFE) is interaction with host EIF4G. The Peptidase C37 domain maps to 1101–1281 (APPTLWSRVT…QAGEGETALE (181 aa)). Residues His-1130, Glu-1154, and Cys-1239 each act as for 3CLpro activity in the active site. The 122-residue stretch at 1516 to 1637 (KNHFDADYTA…STDIDFDPAR (122 aa)) folds into the RdRp catalytic domain. Mg(2+) is bound by residues Asp-1520, Asp-1522, Asp-1624, and Glu-1625.

In terms of assembly, homodimer. Homooligomer. Interacts with NTPase; this interaction increases the proapoptotic activity of the NTPase and is crucial for the formation of the viral replication complex. Interacts with NS4; this interaction is crucial for the formation of the viral replication complex. Interacts (via N-terminus) with host VAPA. Interacts with host MAP1LC3A/LC3; this interaction does not seem to be linked to host autophagy, but rather plays a role in the formation of viral factories. Homooligomer. Interacts with NS1-2; this interaction increases the proapoptotic activity of the NTPase and is crucial for the formation of the viral replication complex. Interacts with NS4; this interaction increases the proapoptotic activity of the NTPase. As to quaternary structure, homodimer. Monomer; in solution. In terms of assembly, interacts with NTPase; this interaction increases the proapoptotic activity of the NTPase. Interacts with NS1-2; this interaction is crucial for the formation of the viral replication complex. Monomer. Interacts with the RNA-directed RNA polymerase; this interaction induces the multimerization of the RdRp and enhances its activity. Interacts with host IEF4G1; this interaction plays a role in translation of viral proteins. As to quaternary structure, homohexamer; also forms fibrous hexameric oligomer. Interacts with the viral genome-linked protein; this interaction induces the multimerization of the RdRp and enhances its activity. Requires Mg(2+) as cofactor. It depends on Mn(2+) as a cofactor. In terms of processing, specific enzymatic cleavages in vivo yield mature proteins. 3CLpro is first autocatalytically cleaved, then processes the whole polyprotein. NS1/2-3 and NS3-4 sites are cleaved rapidly and NS4-5, NS5-6, and NS6-7 sites are processed subsequently and less efficiently. VPg is uridylylated by the polymerase and is covalently attached to the 5'-end of the polyadenylated genomic and subgenomic RNAs. This uridylylated form acts as a nucleotide-peptide primer for the polymerase. Post-translationally, cleaved by host CASP3/caspase 3 at 18-22 h.p.i. The cleavage allows NS1 secretion, which is essential for intestinal infection and resistance to IFN-lambda.

It is found in the host Golgi apparatus membrane. It localises to the secreted. The protein localises to the host endoplasmic reticulum membrane. Its subcellular location is the host cytoplasm. The protein resides in the host perinuclear region. It catalyses the reaction a ribonucleoside 5'-triphosphate + H2O = a ribonucleoside 5'-diphosphate + phosphate + H(+). It carries out the reaction Endopeptidase with a preference for cleavage when the P1 position is occupied by Glu-|-Xaa and the P1' position is occupied by Gly-|-Yaa.. The enzyme catalyses RNA(n) + a ribonucleoside 5'-triphosphate = RNA(n+1) + diphosphate. Its activity is regulated as follows. Inhibited by the chemical compound K36/GC376, which covalently binds to the nucleophilic cysteine residue. Inhibited by various macrocyclic inhibitors. With respect to regulation, inhibited by the guanidine salt GuHCl. Functionally, induces the proliferation of the host smooth ER membranes forming long tubular structures. These remodeled membranes probably form the viral factories that contain the replication complex. Induces the disassembly of host Golgi. May play a role in viral replication by interacting with host VAPA, a vesicle-associated membrane protein that plays a role in SNARE-mediated vesicle fusion. This interaction may target replication complex to intracellular membranes. Displays NTPase activity and RNA helix-unwinding activity. Displays RNA chaperone-like activity and destabilizes dsRNA. Induces the formation of convoluted membranes derived from the host ER. These remodeled membranes probably form the viral factories that contain the replication complex. Initiates host cell death by targeting the mitochondrial outer membrane, leading to the permeabilization of mitochondria, programmed host cell death and viral egress. Probably plays a role in preventing the assembly of host stress granules. In terms of biological role, probable key protein responsible for the formation of membrane alterations by the virus. Induces the formation of convoluted membranes derived from the host ER. These remodeled membranes probably form the viral factories that contain the replication complex. May play a role in targeting replication complex to intracellular membranes. Induces the disassembly of host Golgi and antagonism of Golgi-dependent cellular protein secretion, probably via the mislocalization of COPII-coated vesicles. Its function is as follows. Viral genome-linked protein is covalently linked to the 5'-end of the positive-strand, negative-strand genomic RNAs and subgenomic RNA. Acts as a genome-linked replication primer. May recruit ribosome to viral RNA thereby promoting viral proteins translation. Interacts with host translation initiation complex to allow the translation of viral proteins. Induces the formation of aggregates of RNA-directed RNA polymerase in the presence of RNA. Through its interaction with the viral RNA-directed RNA polymerase, plays a crucial role in enhancing the polymerase activity. Functionally, processes the polyprotein. 3CLpro-RdRp is first released by autocleavage, then all other proteins are cleaved. May cleave host polyadenylate-binding protein thereby inhibiting cellular translation. Replicates genomic and antigenomic RNA by recognizing replications specific signals. Also transcribes a subgenomic mRNA by initiating RNA synthesis internally on antigenomic RNA. This sgRNA codes for structural proteins. Catalyzes the covalent attachment VPg with viral RNAs. This Norovirus (strain Human/NoV/United States/Norwalk/1968/GI) (Hu/NV/NV/1968/US) protein is Genome polyprotein.